A 109-amino-acid chain; its full sequence is uncharacterized protein (109 aa).

A disordered region spans residues 63–109 (DPSTWEPEEHETEHCRGHTLPEKKQKPQGGHGSDKDEDKGNCGCDHC). 2 stretches are compositionally biased toward basic and acidic residues: residues 73–87 (ETEH…EKKQ) and 94–109 (GSDK…CDHC).

This is an uncharacterized protein from Caenorhabditis elegans.